The primary structure comprises 2311 residues: C2 domain-containing protein 3 (2311 aa).

2 disordered regions span residues 447–511 and 543–562; these read SDSS…TSRC and GTAV…RPVR. Basic and acidic residues predominate over residues 470 to 509; the sequence is IALDRGRHRDNSPSEYKEDAKQTKGNDSLRDSKTSEKSTS. C2 domains are found at residues 508–666, 751–888, 952–1112, 1136–1303, 1370–1505, and 1581–1713; these read TSRC…SVTC, GNGG…TRLL, LDPP…HRED, PSGL…SGWY, HKRE…TLAV, and KTEV…CGWY. A disordered region spans residues 939-964; the sequence is GTSQTAMPRPAHFLDPPLSSSQMGRP. Disordered stretches follow at residues 1536 to 1589, 1955 to 1977, 2036 to 2065, 2084 to 2233, and 2261 to 2292; these read PSNS…LLDA, SEAY…GSLN, MTDR…PVNP, NDPS…SNLL, and VREG…PKEE. Basic and acidic residues-rich tracts occupy residues 1565 to 1589 and 1955 to 1964; these read FEEK…LLDA and SEAYEREGQR. Polar residues predominate over residues 2036 to 2047; the sequence is MTDRTSPWSSIL. Over residues 2048–2059 the composition is skewed to basic and acidic residues; it reads SERDSDSMDHPQ. Residues 2084–2095 are compositionally biased toward polar residues; it reads NDPSSVLSSARS. Over residues 2138 to 2151 the composition is skewed to acidic residues; it reads AESEAESQEMDGDP. Positions 2221–2233 are enriched in polar residues; it reads GSESPQVPPSNLL.

The protein localises to the cytoplasm. It is found in the cytoskeleton. The protein resides in the cilium basal body. Its subcellular location is the microtubule organizing center. It localises to the centrosome. The protein localises to the centriole. Component of the centrioles that acts as a positive regulator of centriole elongation. Promotes assembly of centriolar distal appendage, a structure at the distal end of the mother centriole that acts as an anchor of the cilium. Required for primary cilium formation. The protein is C2 domain-containing protein 3 (c2cd3) of Xenopus tropicalis (Western clawed frog).